A 308-amino-acid polypeptide reads, in one-letter code: Ectoine dioxygenase (308 aa).

Gln131 is an L-ectoine binding site. Residue Lys137 coordinates 2-oxoglutarate. Fe cation contacts are provided by His148, Asp150, and His249.

Belongs to the PhyH family. EctD subfamily. As to quaternary structure, homodimer. It depends on Fe(2+) as a cofactor.

It carries out the reaction L-ectoine + 2-oxoglutarate + O2 = 5-hydroxyectoine + succinate + CO2. Functionally, involved in the biosynthesis of 5-hydroxyectoine, called compatible solute, which helps organisms to survive extreme osmotic stress by acting as a highly soluble organic osmolyte. Catalyzes the 2-oxoglutarate-dependent selective hydroxylation of L-ectoine to yield (4S,5S)-5-hydroxyectoine. In Bordetella parapertussis (strain 12822 / ATCC BAA-587 / NCTC 13253), this protein is Ectoine dioxygenase.